The chain runs to 192 residues: MNTIWIAVAAISLLGLAFGAILGYASRRFAVEDDPVVEKIDEILPQSQCGQCGYPGCRPYAEAISCNGEKINRCAPGGEAVMLKISELLNVEPQPIDGEEQELAPARVVAVIDENNCIGCTKCIQACPVDAIVGATRAMHTVMSDLCTGCNLCVDPCPTQCISLQPVAETPDSWKWDLNTIPVRIIPVEHHA.

A hydrophobic region spans residues 1-26; the sequence is MNTIWIAVAAISLLGLAFGAILGYAS. Residues 32-91 enclose the 4Fe-4S domain; the sequence is EDDPVVEKIDEILPQSQCGQCGYPGCRPYAEAISCNGEKINRCAPGGEAVMLKISELLNV. [4Fe-4S] cluster is bound by residues C49, C52, C57, C74, C117, C120, C123, C127, C147, C150, C153, and C157. 4Fe-4S ferredoxin-type domains lie at 108 to 137 and 138 to 167; these read VVAVIDENNCIGCTKCIQACPVDAIVGATR and AMHTVMSDLCTGCNLCVDPCPTQCISLQPV.

Belongs to the 4Fe4S bacterial-type ferredoxin family. RnfB subfamily. In terms of assembly, the complex is composed of six subunits: RsxA, RsxB, RsxC, RsxD, RsxE and RsxG. Requires [4Fe-4S] cluster as cofactor.

Its subcellular location is the cell inner membrane. In terms of biological role, part of a membrane-bound complex that couples electron transfer with translocation of ions across the membrane. Required to maintain the reduced state of SoxR. This Escherichia fergusonii (strain ATCC 35469 / DSM 13698 / CCUG 18766 / IAM 14443 / JCM 21226 / LMG 7866 / NBRC 102419 / NCTC 12128 / CDC 0568-73) protein is Ion-translocating oxidoreductase complex subunit B.